The following is a 130-amino-acid chain: NADH-quinone oxidoreductase subunit A (130 aa).

Helical transmembrane passes span 15 to 35, 67 to 87, and 95 to 115; these read AIHVALSAGIVAAIIVVATII, FLIAALFVIFDMEAAILFAWA, and WVGLIEAAIFIGVLLLALIYL.

It belongs to the complex I subunit 3 family. In terms of assembly, NDH-1 is composed of 14 different subunits. Subunits NuoA, H, J, K, L, M, N constitute the membrane sector of the complex.

It localises to the cell inner membrane. It catalyses the reaction a quinone + NADH + 5 H(+)(in) = a quinol + NAD(+) + 4 H(+)(out). NDH-1 shuttles electrons from NADH, via FMN and iron-sulfur (Fe-S) centers, to quinones in the respiratory chain. The immediate electron acceptor for the enzyme in this species is believed to be ubiquinone. Couples the redox reaction to proton translocation (for every two electrons transferred, four hydrogen ions are translocated across the cytoplasmic membrane), and thus conserves the redox energy in a proton gradient. The chain is NADH-quinone oxidoreductase subunit A from Rhodopseudomonas palustris (strain BisA53).